We begin with the raw amino-acid sequence, 326 residues long: Pyruvate dehydrogenase E1 component subunit alpha (326 aa).

In terms of assembly, heterodimer of an alpha and a beta chain. The cofactor is thiamine diphosphate.

It carries out the reaction N(6)-[(R)-lipoyl]-L-lysyl-[protein] + pyruvate + H(+) = N(6)-[(R)-S(8)-acetyldihydrolipoyl]-L-lysyl-[protein] + CO2. Functionally, the pyruvate dehydrogenase complex catalyzes the overall conversion of pyruvate to acetyl-CoA and CO(2). It contains multiple copies of three enzymatic components: pyruvate dehydrogenase (E1), dihydrolipoamide acetyltransferase (E2) and lipoamide dehydrogenase (E3). This chain is Pyruvate dehydrogenase E1 component subunit alpha (pdhA), found in Rickettsia prowazekii (strain Madrid E).